A 484-amino-acid chain; its full sequence is Glutamyl-tRNA(Gln) amidotransferase subunit A (484 aa).

Active-site charge relay system residues include K76 and S151. S175 (acyl-ester intermediate) is an active-site residue.

It belongs to the amidase family. GatA subfamily. In terms of assembly, heterotrimer of A, B and C subunits.

It carries out the reaction L-glutamyl-tRNA(Gln) + L-glutamine + ATP + H2O = L-glutaminyl-tRNA(Gln) + L-glutamate + ADP + phosphate + H(+). Allows the formation of correctly charged Gln-tRNA(Gln) through the transamidation of misacylated Glu-tRNA(Gln) in organisms which lack glutaminyl-tRNA synthetase. The reaction takes place in the presence of glutamine and ATP through an activated gamma-phospho-Glu-tRNA(Gln). The protein is Glutamyl-tRNA(Gln) amidotransferase subunit A of Saccharophagus degradans (strain 2-40 / ATCC 43961 / DSM 17024).